Here is a 273-residue protein sequence, read N- to C-terminus: Shikimate dehydrogenase (NADP(+)) (273 aa).

Shikimate-binding positions include 18 to 20 and Thr-65; that span reads SKS. Residue Lys-69 is the Proton acceptor of the active site. Glu-81 lines the NADP(+) pocket. Shikimate is bound by residues Asn-90 and Asp-105. Residues 130–134, 154–159, and Met-217 each bind NADP(+); these read GAGGA and NRTHSK. Position 219 (Tyr-219) interacts with shikimate. Gly-240 contacts NADP(+).

It belongs to the shikimate dehydrogenase family. As to quaternary structure, homodimer.

The enzyme catalyses shikimate + NADP(+) = 3-dehydroshikimate + NADPH + H(+). The protein operates within metabolic intermediate biosynthesis; chorismate biosynthesis; chorismate from D-erythrose 4-phosphate and phosphoenolpyruvate: step 4/7. Its function is as follows. Involved in the biosynthesis of the chorismate, which leads to the biosynthesis of aromatic amino acids. Catalyzes the reversible NADPH linked reduction of 3-dehydroshikimate (DHSA) to yield shikimate (SA). The protein is Shikimate dehydrogenase (NADP(+)) of Janthinobacterium sp. (strain Marseille) (Minibacterium massiliensis).